The chain runs to 349 residues: GDP-mannose:glycolipid 4-beta-D-mannosyltransferase (349 aa).

An N-terminal signal peptide occupies residues 1–14 (MSASASLPVTRAAA).

It belongs to the glycosyltransferase 94 family.

Its subcellular location is the cell inner membrane. It catalyses the reaction beta-D-GlcA-(1-&gt;2)-alpha-D-Man-(1-&gt;3)-beta-D-Glc-(1-&gt;4)-alpha-D-Glc-di-trans,octa-cis-undecaprenyl diphosphate + GDP-alpha-D-mannose = beta-D-Man-(1-&gt;4)-beta-D-GlcA-(1-&gt;2)-alpha-D-Man-(1-&gt;3)-beta-D-Glc-(1-&gt;4)-alpha-D-Glc-di-trans,octa-cis-undecaprenyl diphosphate + GDP + H(+). The protein operates within glycan biosynthesis; xanthan biosynthesis. Its function is as follows. Nonprocessive beta-mannosyltransferase that catalyzes the transfer of a mannose residue from GDP-mannose to glucuronic acid-beta-1,2-mannose-alpha-1,3-glucose-beta-1,4-glucose-PP-polyisoprenyl to form the lipid-linked pentasaccharide repeating unit of xanthan, Man-GlcA-Man-Glc(2)-PP-Pol. Is involved in the biosynthesis of the exopolysaccharide xanthan. The sequence is that of GDP-mannose:glycolipid 4-beta-D-mannosyltransferase (gumI) from Xanthomonas campestris pv. campestris (strain ATCC 33913 / DSM 3586 / NCPPB 528 / LMG 568 / P 25).